The following is a 223-amino-acid chain: Ribonuclease 3 (223 aa).

Positions 3 to 125 (LERLQKKLGY…IIAAVYLDAG (123 aa)) constitute an RNase III domain. Glutamate 38 contributes to the Mg(2+) binding site. Aspartate 42 is a catalytic residue. The Mg(2+) site is built by aspartate 111 and glutamate 114. The active site involves glutamate 114. One can recognise a DRBM domain in the interval 152-222 (DPKTRLQEYL…ALQVIKVLGI (71 aa)).

This sequence belongs to the ribonuclease III family. Homodimer. It depends on Mg(2+) as a cofactor.

It localises to the cytoplasm. It catalyses the reaction Endonucleolytic cleavage to 5'-phosphomonoester.. Its function is as follows. Digests double-stranded RNA. Involved in the processing of primary rRNA transcript to yield the immediate precursors to the large and small rRNAs (23S and 16S). Processes some mRNAs, and tRNAs when they are encoded in the rRNA operon. Processes pre-crRNA and tracrRNA of type II CRISPR loci if present in the organism. The sequence is that of Ribonuclease 3 from Glaesserella parasuis serovar 5 (strain SH0165) (Haemophilus parasuis).